A 921-amino-acid chain; its full sequence is Respiratory burst oxidase homolog protein D (921 aa).

Residues 1-71 are disordered; the sequence is MKMRRGNSSN…RSNSVAGGRG (71 aa). Residues 1–376 lie on the Cytoplasmic side of the membrane; it reads MKMRRGNSSN…KYFILDNWQR (376 aa). Residues S8, S9, S26, and S39 each carry the phosphoserine modification. Polar residues predominate over residues 21 to 31; that stretch reads NSDTNSDTESI. Residues 44–53 show a composition bias toward basic residues; sequence RPKRASKKNA. EF-hand-like regions lie at residues 193 to 203 and 230 to 241; these read SADSNGLLLSA and NNVSGDAITKEQ. 2 EF-hand domains span residues 253-288 and 297-332; these read SFDA…SASA and QAKE…APNQ. 5 residues coordinate Ca(2+): D266, D268, D270, R272, and E277. Phosphoserine occurs at positions 339, 343, and 347. A helical membrane pass occupies residues 377-397; the sequence is LWIMMLWLGICGGLFTYKFIQ. Residues 398-461 lie on the Extracellular side of the membrane; it reads YKNKAAYGVM…FDDSLNFHKV (64 aa). The Ferric oxidoreductase domain maps to 415–572; sequence KGGAETLKFN…LFIIVYALLI (158 aa). Residues 462–482 form a helical membrane-spanning segment; the sequence is IASGIVVGVLLHAGAHLTCDF. Residues 483–516 lie on the Cytoplasmic side of the membrane; the sequence is PRLIAADEDTYEPMEKYFGDQPTSYWWFVKGVEG. The chain crosses the membrane as a helical span at residues 517–537; sequence WTGIVMVVLMAIAFTLATPWF. Over 538 to 559 the chain is Extracellular; that stretch reads RRNKLNLPNFLKKLTGFNAFWY. The chain crosses the membrane as a helical span at residues 560-580; it reads THHLFIIVYALLIVHGIKLYL. At 581 to 588 the chain is on the cytoplasmic side; sequence TKIWYQKT. Residues 589-606 traverse the membrane as a helical segment; the sequence is TWMYLAVPILLYASERLL. Residues 607–734 are Extracellular-facing; it reads RAFRSSIKPV…PYGAPAQDYK (128 aa). An FAD-binding FR-type domain is found at 611 to 732; that stretch reads SSIKPVKMIK…DGPYGAPAQD (122 aa). The helical transmembrane segment at 735-755 threads the bilayer; the sequence is KYDVVLLVGLGIGATPMISIL. Residues 756–921 are Cytoplasmic-facing; the sequence is KDIINNMKGP…TKFDFHKENF (166 aa).

The protein belongs to the RBOH (TC 5.B.1.3) family. As to quaternary structure, monomer and homodimer. Interacts with BIK1 and FLS2. Interacts with PBL13. Binds to SIK1 upon flagellin perception and becomes activated by phosphorylation. In terms of processing, phosphorylated at Ser-39, Ser-343 and Ser-347 by BIK1 upon flagellin (flg22) treatment. Activated by phosphorylation at Ser-347 mediated by SIK1 and at Ser-8, Ser-9 and Ser-339 upon flagellin (e.g. flg22) perception. In terms of tissue distribution, more abundant in roots than in leaves, stems or inflorescences. Expressed in mesophyll and guard cells.

Its subcellular location is the membrane. With respect to regulation, inhibited by diphenylene iodinium (DPI). Functionally, calcium-dependent NADPH oxidase that generates superoxide. Involved in the generation of reactive oxygen species (ROS) during incompatible interactions with pathogens, in response to pathogen-associated molecular pattern (PAMP)-triggered immunity (PTI) signaling and in UV-B and abscisic acid ROS-dependent signaling and via SIK1 mediated activation by phosphorylation. Might be required for ROS signal amplification during light stress. The chain is Respiratory burst oxidase homolog protein D from Arabidopsis thaliana (Mouse-ear cress).